A 254-amino-acid chain; its full sequence is MSFEEGADLNASHCCREWLAAVLGNTHVRWGWFVEETLVKVERFPAHQPLSWPQQTELWLAPVGSAPLPPASPWVHQLELSQVPLRDPYPGLGLDRALALWAAGIHYGWPCLVIDAGTALTLTGADSEGSLVGGAILPGLGLQAQALADHTALLPKVQWDPQDPLPPRWANDTVAAIRSGILHTLLAGLREFIADWRRRFPQGPLLLTGGDGKWLHPHLGPLDPELRWDPHLVLRGIAGCRQLHRTARHSPSAE.

Residue 22-29 (VLGNTHVR) participates in ATP binding. Substrate-binding positions include Y89 and 93-96 (GLDR). D95 (proton acceptor) is an active-site residue. D115 is a binding site for K(+). T118 lines the ATP pocket. T173 lines the substrate pocket.

It belongs to the type III pantothenate kinase family. As to quaternary structure, homodimer. NH4(+) is required as a cofactor. K(+) serves as cofactor.

It localises to the cytoplasm. The catalysed reaction is (R)-pantothenate + ATP = (R)-4'-phosphopantothenate + ADP + H(+). The protein operates within cofactor biosynthesis; coenzyme A biosynthesis; CoA from (R)-pantothenate: step 1/5. Functionally, catalyzes the phosphorylation of pantothenate (Pan), the first step in CoA biosynthesis. The protein is Type III pantothenate kinase of Synechococcus sp. (strain JA-2-3B'a(2-13)) (Cyanobacteria bacterium Yellowstone B-Prime).